The following is a 631-amino-acid chain: Phosphomethylpyrimidine synthase (631 aa).

Substrate-binding positions include Asn-239, Met-268, Tyr-297, His-333, 353–355 (SRG), 394–397 (DGLR), and Glu-433. Residue His-437 coordinates Zn(2+). Tyr-460 provides a ligand contact to substrate. Residue His-501 coordinates Zn(2+). Positions 581, 584, and 589 each coordinate [4Fe-4S] cluster.

This sequence belongs to the ThiC family. As to quaternary structure, homodimer. [4Fe-4S] cluster serves as cofactor.

The catalysed reaction is 5-amino-1-(5-phospho-beta-D-ribosyl)imidazole + S-adenosyl-L-methionine = 4-amino-2-methyl-5-(phosphooxymethyl)pyrimidine + CO + 5'-deoxyadenosine + formate + L-methionine + 3 H(+). It participates in cofactor biosynthesis; thiamine diphosphate biosynthesis. Functionally, catalyzes the synthesis of the hydroxymethylpyrimidine phosphate (HMP-P) moiety of thiamine from aminoimidazole ribotide (AIR) in a radical S-adenosyl-L-methionine (SAM)-dependent reaction. This Salmonella agona (strain SL483) protein is Phosphomethylpyrimidine synthase.